A 476-amino-acid polypeptide reads, in one-letter code: 3-isopropylmalate dehydratase large subunit (476 aa).

C353, C413, and C416 together coordinate [4Fe-4S] cluster.

The protein belongs to the aconitase/IPM isomerase family. LeuC type 1 subfamily. In terms of assembly, heterodimer of LeuC and LeuD. It depends on [4Fe-4S] cluster as a cofactor.

The catalysed reaction is (2R,3S)-3-isopropylmalate = (2S)-2-isopropylmalate. The protein operates within amino-acid biosynthesis; L-leucine biosynthesis; L-leucine from 3-methyl-2-oxobutanoate: step 2/4. Catalyzes the isomerization between 2-isopropylmalate and 3-isopropylmalate, via the formation of 2-isopropylmaleate. This is 3-isopropylmalate dehydratase large subunit from Photobacterium profundum (strain SS9).